The sequence spans 97 residues: Large ribosomal subunit protein bL27 (97 aa).

The disordered stretch occupies residues 14–36 (HKKGGGSTSNGRDSQAKRLGAKA).

It belongs to the bacterial ribosomal protein bL27 family.

This Streptococcus sanguinis (strain SK36) protein is Large ribosomal subunit protein bL27.